Here is a 405-residue protein sequence, read N- to C-terminus: Pre-mRNA-splicing factor cwc-24 (405 aa).

2 disordered regions span residues 1–114 (MADT…NTIY) and 162–184 (TKKK…DGTY). Low complexity predominate over residues 15 to 29 (EPTTATPTAPIAPVA). Over residues 31–46 (FKKRGAKGKANLRKRP) the composition is skewed to basic residues. The span at 56–70 (SDDDSSDFESSEDEA) shows a compositional bias: acidic residues. Positions 74-83 (RIKRRKKNHH) are enriched in basic residues. The C3H1-type zinc finger occupies 221-249 (DMAPDVCKDYKQTGFCGFGDNCKFLHARE). The RING-type zinc-finger motif lies at 310 to 349 (CIICRGPYSNSPVVTRCGHYFCEACALKRYRKDPSCAACG). Over residues 370 to 386 (KARAERLRREARERGEE) the composition is skewed to basic and acidic residues. Residues 370-405 (KARAERLRREARERGEEVSEEEDEGEDEGEGAEGSD) are disordered. The span at 387–405 (VSEEEDEGEDEGEGAEGSD) shows a compositional bias: acidic residues.

This sequence belongs to the CWC24 family. Associated with the spliceosome.

The protein localises to the nucleus. In terms of biological role, involved in pre-mRNA splicing. This chain is Pre-mRNA-splicing factor cwc-24 (cwc-24), found in Neurospora crassa (strain ATCC 24698 / 74-OR23-1A / CBS 708.71 / DSM 1257 / FGSC 987).